We begin with the raw amino-acid sequence, 706 residues long: DNA ligase (706 aa).

NAD(+)-binding positions include 40–44 (DLQYD), 89–90 (SI), and Glu-120. The active-site N6-AMP-lysine intermediate is the Lys-122. NAD(+) contacts are provided by Arg-143, Glu-190, Lys-306, and Lys-330. Positions 424, 427, 442, and 447 each coordinate Zn(2+). The BRCT domain maps to 625-706 (EANLPLAGKN…FRLRYETEAT (82 aa)).

Belongs to the NAD-dependent DNA ligase family. LigA subfamily. Mg(2+) serves as cofactor. It depends on Mn(2+) as a cofactor.

It catalyses the reaction NAD(+) + (deoxyribonucleotide)n-3'-hydroxyl + 5'-phospho-(deoxyribonucleotide)m = (deoxyribonucleotide)n+m + AMP + beta-nicotinamide D-nucleotide.. DNA ligase that catalyzes the formation of phosphodiester linkages between 5'-phosphoryl and 3'-hydroxyl groups in double-stranded DNA using NAD as a coenzyme and as the energy source for the reaction. It is essential for DNA replication and repair of damaged DNA. This Rhodopirellula baltica (strain DSM 10527 / NCIMB 13988 / SH1) protein is DNA ligase.